We begin with the raw amino-acid sequence, 78 residues long: DNA-directed RNA polymerase subunit Rpo5 (78 aa).

It belongs to the archaeal Rpo5/eukaryotic RPB5 RNA polymerase subunit family. As to quaternary structure, part of the RNA polymerase complex.

Its subcellular location is the cytoplasm. It carries out the reaction RNA(n) + a ribonucleoside 5'-triphosphate = RNA(n+1) + diphosphate. Functionally, DNA-dependent RNA polymerase (RNAP) catalyzes the transcription of DNA into RNA using the four ribonucleoside triphosphates as substrates. In Methanothrix thermoacetophila (strain DSM 6194 / JCM 14653 / NBRC 101360 / PT) (Methanosaeta thermophila), this protein is DNA-directed RNA polymerase subunit Rpo5.